A 396-amino-acid polypeptide reads, in one-letter code: NADH-quinone oxidoreductase subunit D (396 aa).

It belongs to the complex I 49 kDa subunit family. NDH-1 is composed of 14 different subunits. Subunits NuoB, C, D, E, F, and G constitute the peripheral sector of the complex.

Its subcellular location is the cell inner membrane. The catalysed reaction is a quinone + NADH + 5 H(+)(in) = a quinol + NAD(+) + 4 H(+)(out). NDH-1 shuttles electrons from NADH, via FMN and iron-sulfur (Fe-S) centers, to quinones in the respiratory chain. The immediate electron acceptor for the enzyme in this species is believed to be ubiquinone. Couples the redox reaction to proton translocation (for every two electrons transferred, four hydrogen ions are translocated across the cytoplasmic membrane), and thus conserves the redox energy in a proton gradient. In Bartonella henselae (strain ATCC 49882 / DSM 28221 / CCUG 30454 / Houston 1) (Rochalimaea henselae), this protein is NADH-quinone oxidoreductase subunit D.